Here is a 348-residue protein sequence, read N- to C-terminus: UDP-N-acetylglucosamine--N-acetylmuramyl-(pentapeptide) pyrophosphoryl-undecaprenol N-acetylglucosamine transferase (348 aa).

UDP-N-acetyl-alpha-D-glucosamine is bound by residues 11 to 13, Asn-120, Arg-161, Ser-187, and Gln-281; that span reads TGG.

Belongs to the glycosyltransferase 28 family. MurG subfamily.

The protein resides in the cell inner membrane. The catalysed reaction is di-trans,octa-cis-undecaprenyl diphospho-N-acetyl-alpha-D-muramoyl-L-alanyl-D-glutamyl-meso-2,6-diaminopimeloyl-D-alanyl-D-alanine + UDP-N-acetyl-alpha-D-glucosamine = di-trans,octa-cis-undecaprenyl diphospho-[N-acetyl-alpha-D-glucosaminyl-(1-&gt;4)]-N-acetyl-alpha-D-muramoyl-L-alanyl-D-glutamyl-meso-2,6-diaminopimeloyl-D-alanyl-D-alanine + UDP + H(+). It participates in cell wall biogenesis; peptidoglycan biosynthesis. Functionally, cell wall formation. Catalyzes the transfer of a GlcNAc subunit on undecaprenyl-pyrophosphoryl-MurNAc-pentapeptide (lipid intermediate I) to form undecaprenyl-pyrophosphoryl-MurNAc-(pentapeptide)GlcNAc (lipid intermediate II). The protein is UDP-N-acetylglucosamine--N-acetylmuramyl-(pentapeptide) pyrophosphoryl-undecaprenol N-acetylglucosamine transferase of Crocosphaera subtropica (strain ATCC 51142 / BH68) (Cyanothece sp. (strain ATCC 51142)).